The primary structure comprises 108 residues: Vitelline membrane protein 15a-1 (108 aa).

Residues 1-18 (MNKFIILAIFALAVGAMA) form the signal peptide. A VM domain is found at 52-88 (HAPHAKCGANLLVGCAPSVAHVPCVPLPGHAPAHGYG). The segment at 87-108 (YGHAPAPHYRAPESDSFDQFEE) is disordered.

It belongs to the vitelline membrane family. Expressed in the middle and posterior regions of the follicle cells.

The protein localises to the secreted. In Aedes aegypti (Yellowfever mosquito), this protein is Vitelline membrane protein 15a-1.